We begin with the raw amino-acid sequence, 397 residues long: Argininosuccinate synthase (397 aa).

Residue 8–16 participates in ATP binding; it reads AYSGGLDTS. Tyr86 and Ser91 together coordinate L-citrulline. An ATP-binding site is contributed by Gly116. Residues Thr118, Asn122, and Asp123 each coordinate L-aspartate. Asn122 provides a ligand contact to L-citrulline. L-citrulline contacts are provided by Arg126, Ser175, Ser184, Glu260, and Tyr272.

It belongs to the argininosuccinate synthase family. Type 1 subfamily. Homotetramer.

It localises to the cytoplasm. The catalysed reaction is L-citrulline + L-aspartate + ATP = 2-(N(omega)-L-arginino)succinate + AMP + diphosphate + H(+). The protein operates within amino-acid biosynthesis; L-arginine biosynthesis; L-arginine from L-ornithine and carbamoyl phosphate: step 2/3. In Clostridium botulinum (strain 657 / Type Ba4), this protein is Argininosuccinate synthase.